The primary structure comprises 118 residues: Large ribosomal subunit protein uL22c (118 aa).

This sequence belongs to the universal ribosomal protein uL22 family. In terms of assembly, part of the 50S ribosomal subunit.

Its subcellular location is the plastid. It localises to the organellar chromatophore. This protein binds specifically to 23S rRNA. Its function is as follows. The globular domain of the protein is located near the polypeptide exit tunnel on the outside of the subunit, while an extended beta-hairpin is found that lines the wall of the exit tunnel in the center of the 70S ribosome. The chain is Large ribosomal subunit protein uL22c (rpl22) from Paulinella chromatophora.